The sequence spans 341 residues: Phosphoribosylformylglycinamidine cyclo-ligase (341 aa).

It belongs to the AIR synthase family.

It is found in the cytoplasm. The catalysed reaction is 2-formamido-N(1)-(5-O-phospho-beta-D-ribosyl)acetamidine + ATP = 5-amino-1-(5-phospho-beta-D-ribosyl)imidazole + ADP + phosphate + H(+). The protein operates within purine metabolism; IMP biosynthesis via de novo pathway; 5-amino-1-(5-phospho-D-ribosyl)imidazole from N(2)-formyl-N(1)-(5-phospho-D-ribosyl)glycinamide: step 2/2. This Xanthomonas axonopodis pv. citri (strain 306) protein is Phosphoribosylformylglycinamidine cyclo-ligase.